The sequence spans 132 residues: MVLSLCVMAPNRIVWNSEVREIILSTNSGQIGILPNHAPLLAALDMGVLKIRSDKQWSAMALMGGFAMIDNNRVIILVNEAERASEIDPEEARKSFQTAQAELAEAEGRRKLIEANLTFKRAKARLEASTIV.

This sequence belongs to the ATPase epsilon chain family. In terms of assembly, F-type ATPases have 2 components, CF(1) - the catalytic core - and CF(0) - the membrane proton channel. CF(1) has five subunits: alpha(3), beta(3), gamma(1), delta(1), epsilon(1). CF(0) has three main subunits: a, b and c.

It localises to the plastid. It is found in the chloroplast thylakoid membrane. In terms of biological role, produces ATP from ADP in the presence of a proton gradient across the membrane. The protein is ATP synthase epsilon chain, chloroplastic of Adiantum capillus-veneris (Maidenhair fern).